Here is a 188-residue protein sequence, read N- to C-terminus: PRA1 family protein 3 (188 aa).

Met-1 carries the post-translational modification N-acetylmethionine. The Cytoplasmic portion of the chain corresponds to 1–35; that stretch reads MEVQVAPLRSWEDFFPGSDRFGRPDFKDISKWNNR. 2 consecutive transmembrane segments (helical) span residues 36–56 and 57–77; these read VVNN…AVVA and IVGF…ILVF. The Cytoplasmic portion of the chain corresponds to 78-93; sequence LGFVWVSHNKDILRRM. 2 helical membrane passes run 94-114 and 115-135; these read KKQY…FLIS and YLGD…LMFI. Residues 136–188 lie on the Cytoplasmic side of the membrane; that stretch reads HASLRLRNIKNKLENKKEEIGLKKTPMGIILDALEQQEDNINKLASYIPKVKE. The tract at residues 136-188 is targeting to endoplasmic reticulum membrane; the sequence is HASLRLRNIKNKLENKKEEIGLKKTPMGIILDALEQQEDNINKLASYIPKVKE.

It belongs to the PRA1 family. Binds to prenylated RAB and Ras superfamily members.

The protein localises to the endoplasmic reticulum membrane. It is found in the cell membrane. It localises to the cytoplasm. Its subcellular location is the cytoskeleton. Its function is as follows. Regulates intracellular concentrations of taurine and glutamate. Negatively modulates SLC1A1/EAAC1 glutamate transport activity by decreasing its affinity for glutamate in a PKC activity-dependent manner. May be involved in membrane traffic. This Gallus gallus (Chicken) protein is PRA1 family protein 3 (ARL6IP5).